Consider the following 512-residue polypeptide: GTPase Obg (512 aa).

Positions 2–159 constitute an Obg domain; that stretch reads ATFVDTVTLH…GDVVLELKVV (158 aa). The region spanning 160-336 is the OBG-type G domain; the sequence is ADVALVGYPS…LSFALAELVE (177 aa). Residues 166-173, 191-195, 212-215, 288-291, and 317-319 contribute to the GTP site; these read GYPSAGKS, FTTLH, DVPG, NKID, and STV. Mg(2+) contacts are provided by S173 and T193. Positions 355 to 439 constitute an OCT domain; the sequence is PRAVNEKPFT…GDGIVFDWEP (85 aa). Residues 491–512 form a disordered region; that stretch reads GEAGLWADEDGTDEDASSDAKA. The span at 497 to 512 shows a compositional bias: acidic residues; sequence ADEDGTDEDASSDAKA.

Belongs to the TRAFAC class OBG-HflX-like GTPase superfamily. OBG GTPase family. In terms of assembly, monomer. The cofactor is Mg(2+).

The protein resides in the cytoplasm. In terms of biological role, an essential GTPase which binds GTP, GDP and possibly (p)ppGpp with moderate affinity, with high nucleotide exchange rates and a fairly low GTP hydrolysis rate. Plays a role in control of the cell cycle, stress response, ribosome biogenesis and in those bacteria that undergo differentiation, in morphogenesis control. This is GTPase Obg from Clavibacter michiganensis subsp. michiganensis (strain NCPPB 382).